Reading from the N-terminus, the 307-residue chain is Protein pid-3 (307 aa).

As to quaternary structure, component of the pid-1 variant of the PETISCO complex (also called the pid-3, erh-2, tofu-6, and ife-3 small RNA complex) containing at least pid-1, tofu-6, ife-3, pid-3, and erh-2, which is required for the biogenesis of a class of 21 nucleotide PIWI-interacting RNAs (piRNAs) that possess a uracil residue at the 5'-end (also called 21U-RNAs). Within the complex interacts with pid-1; the interaction is direct. Component of the tost-1 variant of the PETISCO complex (also called the pid-3, erh-2, tofu-6, and ife-3 small RNA complex) containing at least tost-1, tofu-6, ife-3, pid-3, and erh-2, which plays an essential role in embryogenesis. Within the complex interacts with tost-1. Within the pid-1 and tost-1 variants of the PETISCO complexes interacts with tofu-6 (via the RRM domain) and erh-2. In contrast to the pid-1 variant of the PETISCO complex, the tost-1 variant of the PETISCO complex plays a minor role in the biogenesis of 21U-RNAs. Expressed in the germline (at protein level).

Its subcellular location is the cytoplasm. The protein resides in the perinuclear region. The protein localises to the nucleus. Functionally, component of the pid-1 and tost-1 variants of the PETISCO complexes, which have roles in the biogenesis of a class of 21 nucleotide PIWI-interacting RNAs (piRNAs) that possess a uracil residue at the 5'-end (also called 21U-RNAs) and embryogenesis, respectively. Within the pid-1 variant of the PETISCO complex may stabilize 21U-RNA precursor molecules. Promotes the biogenesis of 21U-RNAs. Required for chromosome segregation and cell division in early embryos. This is Protein pid-3 from Caenorhabditis elegans.